Here is a 69-residue protein sequence, read N- to C-terminus: Large ribosomal subunit protein uL29 (69 aa).

The protein belongs to the universal ribosomal protein uL29 family.

This is Large ribosomal subunit protein uL29 from Polaromonas sp. (strain JS666 / ATCC BAA-500).